Reading from the N-terminus, the 323-residue chain is Delta(7)-sterol 5(6)-desaturase ERG3B (323 aa).

Helical transmembrane passes span 67-87 (ASIL…SAAL), 112-132 (IQSS…FFLG), and 150-170 (SWLA…IYWI). Residues 157–285 (ILYMVFNDLG…YFTWADNYWG (129 aa)) form the Fatty acid hydroxylase domain. The Histidine box-1 motif lies at 171–175 (HRLEH). Residues 184–188 (HKPHH) carry the Histidine box-2 motif. Residues 262-266 (HTLHH) carry the Histidine box-3 motif.

It belongs to the sterol desaturase family.

Its subcellular location is the endoplasmic reticulum membrane. It catalyses the reaction episterol + 2 Fe(II)-[cytochrome b5] + O2 + 2 H(+) = 5-dehydroepisterol + 2 Fe(III)-[cytochrome b5] + 2 H2O. It participates in steroid metabolism; ergosterol biosynthesis. Functionally, C-5 sterol desaturase; part of the third module of ergosterol biosynthesis pathway that includes the late steps of the pathway. ERG3A and ERG3BB catalyze the introduction of a C-5 double bond in the B ring to produce 5-dehydroepisterol. The third module or late pathway involves the ergosterol synthesis itself through consecutive reactions that mainly occur in the endoplasmic reticulum (ER) membrane. Firstly, the squalene synthase ERG9 catalyzes the condensation of 2 farnesyl pyrophosphate moieties to form squalene, which is the precursor of all steroids. Squalene synthase is crucial for balancing the incorporation of farnesyl diphosphate (FPP) into sterol and nonsterol isoprene synthesis. Secondly, squalene is converted into lanosterol by the consecutive action of the squalene epoxidase ERG1 and the lanosterol synthase ERG7. Then, the delta(24)-sterol C-methyltransferase ERG6 methylates lanosterol at C-24 to produce eburicol. Eburicol is the substrate of the sterol 14-alpha demethylase encoded by CYP51A, CYP51B and CYP51C, to yield 4,4,24-trimethyl ergosta-8,14,24(28)-trienol. CYP51B encodes the enzyme primarily responsible for sterol 14-alpha-demethylation, and plays an essential role in ascospore formation. CYP51A encodes an additional sterol 14-alpha-demethylase, induced on ergosterol depletion and responsible for the intrinsic variation in azole sensitivity. The third CYP51 isoform, CYP51C, does not encode a sterol 14-alpha-demethylase, but is required for full virulence on host wheat ears. The C-14 reductase ERG24 then reduces the C14=C15 double bond which leads to 4,4-dimethylfecosterol. A sequence of further demethylations at C-4, involving the C-4 demethylation complex containing the C-4 methylsterol oxidases ERG25, the sterol-4-alpha-carboxylate 3-dehydrogenase ERG26 and the 3-keto-steroid reductase ERG27, leads to the production of fecosterol via 4-methylfecosterol. ERG28 has a role as a scaffold to help anchor ERG25, ERG26 and ERG27 to the endoplasmic reticulum. The C-8 sterol isomerase ERG2 then catalyzes the reaction which results in unsaturation at C-7 in the B ring of sterols and thus converts fecosterol to episterol. The sterol-C5-desaturases ERG3A and ERG3BB then catalyze the introduction of a C-5 double bond in the B ring to produce 5-dehydroepisterol. The C-22 sterol desaturases ERG5A and ERG5B further convert 5-dehydroepisterol into ergosta-5,7,22,24(28)-tetraen-3beta-ol by forming the C-22(23) double bond in the sterol side chain. Finally, ergosta-5,7,22,24(28)-tetraen-3beta-ol is substrate of the C-24(28) sterol reductase ERG4 to produce ergosterol. The chain is Delta(7)-sterol 5(6)-desaturase ERG3B from Gibberella zeae (strain ATCC MYA-4620 / CBS 123657 / FGSC 9075 / NRRL 31084 / PH-1) (Wheat head blight fungus).